Reading from the N-terminus, the 193-residue chain is ATP synthase subunit b 1 (193 aa).

Residues 13-32 (PAVTGGDTHSGTGVPAEAHG) form a disordered region. The chain crosses the membrane as a helical span at residues 40–60 (ATFPSQLLWLAITFGLFYLFL).

Belongs to the ATPase B chain family. F-type ATPases have 2 components, F(1) - the catalytic core - and F(0) - the membrane proton channel. F(1) has five subunits: alpha(3), beta(3), gamma(1), delta(1), epsilon(1). F(0) has three main subunits: a(1), b(2) and c(10-14). The alpha and beta chains form an alternating ring which encloses part of the gamma chain. F(1) is attached to F(0) by a central stalk formed by the gamma and epsilon chains, while a peripheral stalk is formed by the delta and b chains.

Its subcellular location is the cell inner membrane. Its function is as follows. F(1)F(0) ATP synthase produces ATP from ADP in the presence of a proton or sodium gradient. F-type ATPases consist of two structural domains, F(1) containing the extramembraneous catalytic core and F(0) containing the membrane proton channel, linked together by a central stalk and a peripheral stalk. During catalysis, ATP synthesis in the catalytic domain of F(1) is coupled via a rotary mechanism of the central stalk subunits to proton translocation. Component of the F(0) channel, it forms part of the peripheral stalk, linking F(1) to F(0). This Mesorhizobium japonicum (strain LMG 29417 / CECT 9101 / MAFF 303099) (Mesorhizobium loti (strain MAFF 303099)) protein is ATP synthase subunit b 1.